A 342-amino-acid chain; its full sequence is Holliday junction branch migration complex subunit RuvB (342 aa).

A large ATPase domain (RuvB-L) region spans residues 1–179; the sequence is MTNILSPEKS…FGIPMRLNFY (179 aa). ATP-binding positions include isoleucine 18, arginine 19, glycine 60, lysine 63, threonine 64, threonine 65, 126–128, arginine 169, tyrosine 179, and arginine 216; that span reads EDF. Threonine 64 lines the Mg(2+) pocket. The small ATPAse domain (RuvB-S) stretch occupies residues 180-250; that stretch reads NTGELKKVLN…ISDFGLNRLE (71 aa). A head domain (RuvB-H) region spans residues 253–342; the sequence is RIGLDSNDYR…HQFNIFNENE (90 aa). Residues arginine 289, arginine 308, and arginine 313 each coordinate DNA.

Belongs to the RuvB family. Homohexamer. Forms an RuvA(8)-RuvB(12)-Holliday junction (HJ) complex. HJ DNA is sandwiched between 2 RuvA tetramers; dsDNA enters through RuvA and exits via RuvB. An RuvB hexamer assembles on each DNA strand where it exits the tetramer. Each RuvB hexamer is contacted by two RuvA subunits (via domain III) on 2 adjacent RuvB subunits; this complex drives branch migration. In the full resolvosome a probable DNA-RuvA(4)-RuvB(12)-RuvC(2) complex forms which resolves the HJ.

It localises to the cytoplasm. It catalyses the reaction ATP + H2O = ADP + phosphate + H(+). The RuvA-RuvB-RuvC complex processes Holliday junction (HJ) DNA during genetic recombination and DNA repair, while the RuvA-RuvB complex plays an important role in the rescue of blocked DNA replication forks via replication fork reversal (RFR). RuvA specifically binds to HJ cruciform DNA, conferring on it an open structure. The RuvB hexamer acts as an ATP-dependent pump, pulling dsDNA into and through the RuvAB complex. RuvB forms 2 homohexamers on either side of HJ DNA bound by 1 or 2 RuvA tetramers; 4 subunits per hexamer contact DNA at a time. Coordinated motions by a converter formed by DNA-disengaged RuvB subunits stimulates ATP hydrolysis and nucleotide exchange. Immobilization of the converter enables RuvB to convert the ATP-contained energy into a lever motion, pulling 2 nucleotides of DNA out of the RuvA tetramer per ATP hydrolyzed, thus driving DNA branch migration. The RuvB motors rotate together with the DNA substrate, which together with the progressing nucleotide cycle form the mechanistic basis for DNA recombination by continuous HJ branch migration. Branch migration allows RuvC to scan DNA until it finds its consensus sequence, where it cleaves and resolves cruciform DNA. The sequence is that of Holliday junction branch migration complex subunit RuvB from Rickettsia conorii (strain ATCC VR-613 / Malish 7).